Consider the following 301-residue polypeptide: E3 ubiquitin-protein ligase DIS1 (301 aa).

An RING-type; degenerate zinc finger spans residues 53-89 (CPVCLSAMYPPIHQCSNGHTLCSGCKPRVHNRCPTCR). The SIAH-type; degenerate zinc-finger motif lies at 106-166 (SLELPCKYQN…LVNHLKDDHK (61 aa)).

Belongs to the SINA (Seven in absentia) family. As to quaternary structure, homodimer. Interacts with NEK6. Interacts with SKIPA.

It localises to the nucleus. The protein localises to the cytoplasm. It catalyses the reaction S-ubiquitinyl-[E2 ubiquitin-conjugating enzyme]-L-cysteine + [acceptor protein]-L-lysine = [E2 ubiquitin-conjugating enzyme]-L-cysteine + N(6)-ubiquitinyl-[acceptor protein]-L-lysine.. It participates in protein modification; protein ubiquitination. Its function is as follows. E3 ubiquitin-protein ligase that mediates ubiquitination and subsequent proteasomal degradation of target proteins. E3 ubiquitin ligases accept ubiquitin from an E2 ubiquitin-conjugating enzyme in the form of a thioester and then directly transfers the ubiquitin to targeted substrates. Plays a negative role in drought stress tolerance through transcriptional and post-translational regulation of diverse stress-related genes. Interacts with the serine/threonine-protein kinase NEK6 and promotes its degradation via the 26S proteasome-dependent pathway. In Oryza sativa subsp. japonica (Rice), this protein is E3 ubiquitin-protein ligase DIS1.